The sequence spans 149 residues: Alpha-crystallin A chain (149 aa).

Residues leucine 41–proline 149 form the sHSP domain. Zn(2+) is bound by residues histidine 89, glutamate 91, histidine 96, and histidine 143.

It belongs to the small heat shock protein (HSP20) family. As to quaternary structure, heteropolymer composed of three CRYAA and one CRYAB subunits. Inter-subunit bridging via zinc ions enhances stability, which is crucial as there is no protein turn over in the lens. Can also form homodimers and homotetramers (dimers of dimers) which serve as the building blocks of homooligomers. Within homooligomers, the zinc-binding motif is created from residues of 3 different molecules. His-89 and Glu-91 from one molecule are ligands of the zinc ion, and His-96 and His-143 residues from additional molecules complete the site with tetrahedral coordination geometry.

The protein resides in the cytoplasm. It is found in the nucleus. Contributes to the transparency and refractive index of the lens. May act as a chaperone, preventing aggregation of various proteins under a wide range of stress conditions. The protein is Alpha-crystallin A chain (CRYAA) of Eudromia elegans (Elegant crested-tinamou).